The following is an 88-amino-acid chain: Putative membrane protein insertion efficiency factor (88 aa).

Belongs to the UPF0161 family.

Its subcellular location is the cell membrane. Could be involved in insertion of integral membrane proteins into the membrane. The chain is Putative membrane protein insertion efficiency factor from Exiguobacterium sibiricum (strain DSM 17290 / CCUG 55495 / CIP 109462 / JCM 13490 / 255-15).